Reading from the N-terminus, the 161-residue chain is DNA-directed RNA polymerase 18 kDa subunit (161 aa).

Belongs to the poxviridae DNA-directed RNA polymerase 18 kDa subunit family. As to quaternary structure, the DNA-dependent RNA polymerase used for intermediate and late genes expression consists of eight subunits 147 kDa, 133 kDa, 35 kDa, 30 kDa, 22 kDa, 19 kDa, 18 kDa and 7 kDa totalling more than 500 kDa in mass. The same holoenzyme, with the addition of the transcription-specificity factor RAP94, is used for early gene expression.

The protein localises to the virion. It catalyses the reaction RNA(n) + a ribonucleoside 5'-triphosphate = RNA(n+1) + diphosphate. Its function is as follows. Part of the DNA-dependent RNA polymerase which catalyzes the transcription of viral DNA into RNA using the four ribonucleoside triphosphates as substrates. Responsible for the transcription of early, intermediate and late genes. DNA-dependent RNA polymerase associates with the early transcription factor (ETF) thereby allowing the early genes transcription. Late transcription, and probably also intermediate transcription, require newly synthesized RNA polymerase. In Vertebrata (FPV), this protein is DNA-directed RNA polymerase 18 kDa subunit (RPO18).